The following is a 20-amino-acid chain: Juvenile hormone-binding protein (20 aa).

It localises to the secreted. Prevents juvenile hormone from being hydrolyzed by general esterases by combining with it specifically. The chain is Juvenile hormone-binding protein (JHBP) from Bombyx mori (Silk moth).